The primary structure comprises 692 residues: Threonine--tRNA ligase (692 aa).

The disordered stretch occupies residues 1 to 20 (MSAPAQPAPGVDGGDPSQAR). The region spanning 1-74 (MSAPAQPAPG…DVDTDITPVA (74 aa)) is the TGS domain. The interval 269–575 (DHRKLGVELD…LTEHYAGAFP (307 aa)) is catalytic. The Zn(2+) site is built by Cys-374, His-425, and His-552.

Belongs to the class-II aminoacyl-tRNA synthetase family. Homodimer. The cofactor is Zn(2+).

Its subcellular location is the cytoplasm. The catalysed reaction is tRNA(Thr) + L-threonine + ATP = L-threonyl-tRNA(Thr) + AMP + diphosphate + H(+). In terms of biological role, catalyzes the attachment of threonine to tRNA(Thr) in a two-step reaction: L-threonine is first activated by ATP to form Thr-AMP and then transferred to the acceptor end of tRNA(Thr). Also edits incorrectly charged L-seryl-tRNA(Thr). The chain is Threonine--tRNA ligase from Mycobacterium tuberculosis (strain CDC 1551 / Oshkosh).